Here is a 284-residue protein sequence, read N- to C-terminus: Bifunctional protein FolD (284 aa).

NADP(+) is bound by residues 165–167 (GRS), Ser190, and Val231.

It belongs to the tetrahydrofolate dehydrogenase/cyclohydrolase family. In terms of assembly, homodimer.

It catalyses the reaction (6R)-5,10-methylene-5,6,7,8-tetrahydrofolate + NADP(+) = (6R)-5,10-methenyltetrahydrofolate + NADPH. It carries out the reaction (6R)-5,10-methenyltetrahydrofolate + H2O = (6R)-10-formyltetrahydrofolate + H(+). The protein operates within one-carbon metabolism; tetrahydrofolate interconversion. Its function is as follows. Catalyzes the oxidation of 5,10-methylenetetrahydrofolate to 5,10-methenyltetrahydrofolate and then the hydrolysis of 5,10-methenyltetrahydrofolate to 10-formyltetrahydrofolate. This Geobacillus thermodenitrificans (strain NG80-2) protein is Bifunctional protein FolD.